The primary structure comprises 348 residues: Methylthioribose-1-phosphate isomerase (348 aa).

Residues 48 to 50, R90, and Q195 contribute to the substrate site; that span reads RGA. The active-site Proton donor is the D236. 246–247 contributes to the substrate binding site; sequence NK.

Belongs to the eIF-2B alpha/beta/delta subunits family. MtnA subfamily.

The catalysed reaction is 5-(methylsulfanyl)-alpha-D-ribose 1-phosphate = 5-(methylsulfanyl)-D-ribulose 1-phosphate. Its pathway is amino-acid biosynthesis; L-methionine biosynthesis via salvage pathway; L-methionine from S-methyl-5-thio-alpha-D-ribose 1-phosphate: step 1/6. Catalyzes the interconversion of methylthioribose-1-phosphate (MTR-1-P) into methylthioribulose-1-phosphate (MTRu-1-P). The chain is Methylthioribose-1-phosphate isomerase from Exiguobacterium sibiricum (strain DSM 17290 / CCUG 55495 / CIP 109462 / JCM 13490 / 255-15).